The primary structure comprises 220 residues: 7-cyano-7-deazaguanine synthase 1 (220 aa).

Residue 10–20 (FSGGIDSTVLL) participates in ATP binding. The Zn(2+) site is built by C183, C191, C194, and C197.

This sequence belongs to the QueC family. Homodimer. It depends on Zn(2+) as a cofactor.

It carries out the reaction 7-carboxy-7-deazaguanine + NH4(+) + ATP = 7-cyano-7-deazaguanine + ADP + phosphate + H2O + H(+). The protein operates within purine metabolism; 7-cyano-7-deazaguanine biosynthesis. Catalyzes the ATP-dependent conversion of 7-carboxy-7-deazaguanine (CDG) to 7-cyano-7-deazaguanine (preQ(0)). The protein is 7-cyano-7-deazaguanine synthase 1 of Desulfitobacterium hafniense (strain Y51).